A 358-amino-acid polypeptide reads, in one-letter code: uncharacterized protein (358 aa).

This sequence belongs to the serpin family. Poxviruses subfamily.

This is an uncharacterized protein from Fowlpox virus (strain NVSL) (FPV).